Reading from the N-terminus, the 576-residue chain is MDAKTQPDRSRDVSQPLDKLGPDETLKANSDYLRGTIKQSLADEITSAVTANDAKLMKFFGIYQQDDRDIRDERRRQKLEAAFSFMVRVRLPGGVCSPGQWLKLDELARNYAGDTLRLTTRQTFQFHRVMKHNLRSLIQGLRDILLDTRAACGDDTRGVMSTVNPDLSKLHAEVYALAKRASDHAVHRTGAYKEIWYEAEREQTDGPEEPFYGRTYMPRKFKIGFAIPPSNDIDVYGQDLGFIAIAHRGKLKGFNVAIGGGLGRTDQSPKTYPRLASVIGYIDADKLFPTIDAVMSVQRDYGDRLDRLHARFKYTIDEKGIDWIKAETERRLGFALKPEQPYTFTSNGDPLGWVKGEDGREHCALFIQNGRVINTPDHPMMDGLRAIAQVHKGMFRVTPNQNLIIADIASRDRPEIEALMKEYGLDQFETRSGLRLNSMACVALPTCGLAMAESERYLPDLLTKIEAILNTYGLTDDPITIRMTGCPNGCARPYIAEIGLTGRAPGKYNLYLGGGFHGERLNKMYLENVGEPAILEALDKTLGHYARDRKPGEHFGDFAIRAGYVVEVKEGRFFND.

Basic and acidic residues predominate over residues 1 to 12; sequence MDAKTQPDRSRD. The segment at 1–26 is disordered; the sequence is MDAKTQPDRSRDVSQPLDKLGPDETL. The [4Fe-4S] cluster site is built by C441, C447, C486, and C490. C490 provides a ligand contact to siroheme.

This sequence belongs to the nitrite and sulfite reductase 4Fe-4S domain family. Alpha(8)-beta(8). The alpha component is a flavoprotein, the beta component is a hemoprotein. The cofactor is siroheme. Requires [4Fe-4S] cluster as cofactor.

The catalysed reaction is hydrogen sulfide + 3 NADP(+) + 3 H2O = sulfite + 3 NADPH + 4 H(+). It functions in the pathway sulfur metabolism; hydrogen sulfide biosynthesis; hydrogen sulfide from sulfite (NADPH route): step 1/1. Component of the sulfite reductase complex that catalyzes the 6-electron reduction of sulfite to sulfide. This is one of several activities required for the biosynthesis of L-cysteine from sulfate. This is Sulfite reductase [NADPH] hemoprotein beta-component from Nitrobacter winogradskyi (strain ATCC 25391 / DSM 10237 / CIP 104748 / NCIMB 11846 / Nb-255).